The chain runs to 106 residues: MIITTTPAIEGKNILEYKGVVFGEVISGVNFIKDFAAGLSNFFGGRSNTYEDELIGAREKAMKEMENRAIQMGANAVVGVDIDYEVLGSDNGMLMVTASGTAVYCE.

This sequence belongs to the UPF0145 family.

The protein is UPF0145 protein CLH_2273 of Clostridium botulinum (strain Alaska E43 / Type E3).